A 351-amino-acid chain; its full sequence is DNA polymerase IV (351 aa).

The UmuC domain occupies 4–185 (IIHVDMDCFF…LPLAKIPGVG (182 aa)). The Mg(2+) site is built by D8 and D103. Residue E104 is part of the active site.

Belongs to the DNA polymerase type-Y family. As to quaternary structure, monomer. The cofactor is Mg(2+).

Its subcellular location is the cytoplasm. The enzyme catalyses DNA(n) + a 2'-deoxyribonucleoside 5'-triphosphate = DNA(n+1) + diphosphate. Its function is as follows. Poorly processive, error-prone DNA polymerase involved in untargeted mutagenesis. Copies undamaged DNA at stalled replication forks, which arise in vivo from mismatched or misaligned primer ends. These misaligned primers can be extended by PolIV. Exhibits no 3'-5' exonuclease (proofreading) activity. May be involved in translesional synthesis, in conjunction with the beta clamp from PolIII. The protein is DNA polymerase IV of Shigella dysenteriae serotype 1 (strain Sd197).